Here is a 557-residue protein sequence, read N- to C-terminus: UvrABC system protein C (557 aa).

The region spanning 14–89 (EEPGVYIFKN…IKKYRPKYNV (76 aa)) is the GIY-YIG domain. The 36-residue stretch at 194–229 (EEVFDYLKEKMETHSKMLDFENAAKYRDLLLNLSNV) folds into the UVR domain.

This sequence belongs to the UvrC family. As to quaternary structure, interacts with UvrB in an incision complex.

Its subcellular location is the cytoplasm. Functionally, the UvrABC repair system catalyzes the recognition and processing of DNA lesions. UvrC both incises the 5' and 3' sides of the lesion. The N-terminal half is responsible for the 3' incision and the C-terminal half is responsible for the 5' incision. The chain is UvrABC system protein C from Thermotoga maritima (strain ATCC 43589 / DSM 3109 / JCM 10099 / NBRC 100826 / MSB8).